A 744-amino-acid polypeptide reads, in one-letter code: Phosphoribosylformylglycinamidine synthase subunit PurL (744 aa).

Residue H50 is part of the active site. ATP-binding residues include Y53 and K92. E94 contributes to the Mg(2+) binding site. Residues 95-98 and R117 contribute to the substrate site; that span reads SHNH. H96 (proton acceptor) is an active-site residue. Position 118 (D118) interacts with Mg(2+). Q241 lines the substrate pocket. D269 lines the Mg(2+) pocket. 313 to 315 contributes to the substrate binding site; that stretch reads ESQ. 2 residues coordinate ATP: D495 and G532. Position 533 (N533) interacts with Mg(2+). S535 contributes to the substrate binding site.

It belongs to the FGAMS family. Monomer. Part of the FGAM synthase complex composed of 1 PurL, 1 PurQ and 2 PurS subunits.

The protein localises to the cytoplasm. The catalysed reaction is N(2)-formyl-N(1)-(5-phospho-beta-D-ribosyl)glycinamide + L-glutamine + ATP + H2O = 2-formamido-N(1)-(5-O-phospho-beta-D-ribosyl)acetamidine + L-glutamate + ADP + phosphate + H(+). Its pathway is purine metabolism; IMP biosynthesis via de novo pathway; 5-amino-1-(5-phospho-D-ribosyl)imidazole from N(2)-formyl-N(1)-(5-phospho-D-ribosyl)glycinamide: step 1/2. In terms of biological role, part of the phosphoribosylformylglycinamidine synthase complex involved in the purines biosynthetic pathway. Catalyzes the ATP-dependent conversion of formylglycinamide ribonucleotide (FGAR) and glutamine to yield formylglycinamidine ribonucleotide (FGAM) and glutamate. The FGAM synthase complex is composed of three subunits. PurQ produces an ammonia molecule by converting glutamine to glutamate. PurL transfers the ammonia molecule to FGAR to form FGAM in an ATP-dependent manner. PurS interacts with PurQ and PurL and is thought to assist in the transfer of the ammonia molecule from PurQ to PurL. The protein is Phosphoribosylformylglycinamidine synthase subunit PurL of Rhizobium johnstonii (strain DSM 114642 / LMG 32736 / 3841) (Rhizobium leguminosarum bv. viciae).